Consider the following 187-residue polypeptide: Large ribosomal subunit protein bL9 (187 aa).

The segment at 168–187 is disordered; that stretch reads EEAPAEEDVAAEETSEAAEA.

Belongs to the bacterial ribosomal protein bL9 family.

In terms of biological role, binds to the 23S rRNA. The protein is Large ribosomal subunit protein bL9 of Paramagnetospirillum magneticum (strain ATCC 700264 / AMB-1) (Magnetospirillum magneticum).